We begin with the raw amino-acid sequence, 196 residues long: Gastrula zinc finger protein XlCGF8.2DB (196 aa).

7 C2H2-type zinc fingers span residues 6–28 (FTCKECGKGFTQKRNLASHMTIH), 34–56 (FSCTECGKGFTQKRNLASHLTIH), 62–84 (FPCTECGKGFTQKSNLVSHMKIH), 90–112 (FTCTECGKEFAHKHRLLGHLKIH), 118–140 (FSCTECGKHFAHKYHLVSHMKIH), 146–168 (FTCTECGEHFANKVSLLGHLKMH), and 174–196 (FTCTECGNSFTQVSSLVSHMKIH).

It belongs to the krueppel C2H2-type zinc-finger protein family.

It is found in the nucleus. Its function is as follows. May be involved in transcriptional regulation. This Xenopus laevis (African clawed frog) protein is Gastrula zinc finger protein XlCGF8.2DB.